A 255-amino-acid chain; its full sequence is uncharacterized protein (255 aa).

The first 18 residues, 1 to 18 (MRILIILSIILCSLFTKA), serve as a signal peptide directing secretion.

This sequence belongs to the MlaA family.

This is an uncharacterized protein from Rickettsia bellii (strain RML369-C).